Consider the following 306-residue polypeptide: Type 3 secretion system translocon protein SctB (306 aa).

A helical membrane pass occupies residues 128 to 152; sequence LMIAMAVVSGIMAATSTVASAFSIA.

The protein belongs to the SctB/YopD family. As to quaternary structure, the core secretion machinery of the T3SS is composed of approximately 20 different proteins, including cytoplasmic components, a base, an export apparatus and a needle. This subunit is involved in the formation of a pore, called the translocon, in host membrane. Interacts with YopB/SctE and YopE. Together with YopB/SctE, forms a multimeric integral membrane complex with a mass of between 500 and 700 kDa. Interacts with its cognate chaperone SycD.

The protein localises to the secreted. It is found in the host membrane. In terms of biological role, component of the type III secretion system (T3SS), also called injectisome, which is used to inject bacterial effector proteins into eukaryotic host cells. YopB/SctE and YopD/SctB are inserted into the host membrane where they form a pore and allow the translocation of effector proteins into the cytosol of target cells. Functionally, involved in pathogenesis. Essential for the establishment of Yersinia infections in a mouse model system, but not for the targeting of effector Yops. May modulate the host's immune response at a distance from the site of infection. In Yersinia enterocolitica, this protein is Type 3 secretion system translocon protein SctB.